Consider the following 156-residue polypeptide: Cyanate hydratase (156 aa).

Residues Arg-96, Glu-99, and Ser-122 contribute to the active site.

Belongs to the cyanase family.

It catalyses the reaction cyanate + hydrogencarbonate + 3 H(+) = NH4(+) + 2 CO2. Functionally, catalyzes the reaction of cyanate with bicarbonate to produce ammonia and carbon dioxide. The sequence is that of Cyanate hydratase from Burkholderia pseudomallei (strain 1106a).